The chain runs to 130 residues: Lysozyme C (130 aa).

The C-type lysozyme domain occupies 1 to 130; that stretch reads KIYERCELAR…LTPYIRGCGV (130 aa). Intrachain disulfides connect cysteine 6–cysteine 128, cysteine 30–cysteine 116, cysteine 65–cysteine 81, and cysteine 77–cysteine 95. Residues glutamate 35 and aspartate 53 contribute to the active site.

This sequence belongs to the glycosyl hydrolase 22 family. In terms of assembly, monomer.

The protein resides in the secreted. The enzyme catalyses Hydrolysis of (1-&gt;4)-beta-linkages between N-acetylmuramic acid and N-acetyl-D-glucosamine residues in a peptidoglycan and between N-acetyl-D-glucosamine residues in chitodextrins.. Functionally, lysozymes have primarily a bacteriolytic function; those in tissues and body fluids are associated with the monocyte-macrophage system and enhance the activity of immunoagents. The protein is Lysozyme C (LYZ) of Oryctolagus cuniculus (Rabbit).